The following is a 435-amino-acid chain: Ribosomal protein uS12 methylthiotransferase RimO (435 aa).

An MTTase N-terminal domain is found at His-3–Pro-113. [4Fe-4S] cluster-binding residues include Cys-12, Cys-48, Cys-77, Cys-144, Cys-148, and Cys-151. A Radical SAM core domain is found at Leu-130–Asn-367. A TRAM domain is found at Lys-370–Val-435.

It belongs to the methylthiotransferase family. RimO subfamily. It depends on [4Fe-4S] cluster as a cofactor.

The protein resides in the cytoplasm. The enzyme catalyses L-aspartate(89)-[ribosomal protein uS12]-hydrogen + (sulfur carrier)-SH + AH2 + 2 S-adenosyl-L-methionine = 3-methylsulfanyl-L-aspartate(89)-[ribosomal protein uS12]-hydrogen + (sulfur carrier)-H + 5'-deoxyadenosine + L-methionine + A + S-adenosyl-L-homocysteine + 2 H(+). Functionally, catalyzes the methylthiolation of an aspartic acid residue of ribosomal protein uS12. The protein is Ribosomal protein uS12 methylthiotransferase RimO of Legionella pneumophila subsp. pneumophila (strain Philadelphia 1 / ATCC 33152 / DSM 7513).